The sequence spans 364 residues: D-alanine--D-alanine ligase (364 aa).

One can recognise an ATP-grasp domain in the interval 145-354 (KMAFEQAGLP…FPELVDKLVQ (210 aa)). 181-236 (EASLGYPCFVKPANLGSSVGISKVRSRQELEDALDNAANYDRRIIIEAGVAAREVE) contributes to the ATP binding site. Residues Asp307, Glu321, and Asn323 each coordinate Mg(2+).

This sequence belongs to the D-alanine--D-alanine ligase family. The cofactor is Mg(2+). It depends on Mn(2+) as a cofactor.

The protein localises to the cytoplasm. The catalysed reaction is 2 D-alanine + ATP = D-alanyl-D-alanine + ADP + phosphate + H(+). It functions in the pathway cell wall biogenesis; peptidoglycan biosynthesis. Functionally, cell wall formation. This Nostoc sp. (strain PCC 7120 / SAG 25.82 / UTEX 2576) protein is D-alanine--D-alanine ligase.